A 101-amino-acid chain; its full sequence is Small ribosomal subunit protein uS14 (101 aa).

Belongs to the universal ribosomal protein uS14 family. Part of the 30S ribosomal subunit. Contacts proteins S3 and S10.

In terms of biological role, binds 16S rRNA, required for the assembly of 30S particles and may also be responsible for determining the conformation of the 16S rRNA at the A site. This Arthrobacter sp. (strain FB24) protein is Small ribosomal subunit protein uS14.